The chain runs to 199 residues: ATP synthase subunit a (199 aa).

The next 5 membrane-spanning stretches (helical) occupy residues 2–22 (NQVY…LFYF), 53–73 (VISV…YFTY), 80–100 (MVEF…LTFI), 141–161 (LTVN…GLEL), and 169–189 (WLSI…SYIF).

It belongs to the ATPase A chain family. As to quaternary structure, F-type ATPases have 2 components, CF(1) - the catalytic core - and CF(0) - the membrane proton channel. CF(1) has five subunits: alpha(3), beta(3), gamma(1), delta(1), epsilon(1). CF(0) has three main subunits: a, b and c.

Its subcellular location is the mitochondrion inner membrane. In terms of biological role, mitochondrial membrane ATP synthase (F(1)F(0) ATP synthase or Complex V) produces ATP from ADP in the presence of a proton gradient across the membrane which is generated by electron transport complexes of the respiratory chain. F-type ATPases consist of two structural domains, F(1) - containing the extramembraneous catalytic core and F(0) - containing the membrane proton channel, linked together by a central stalk and a peripheral stalk. During catalysis, ATP synthesis in the catalytic domain of F(1) is coupled via a rotary mechanism of the central stalk subunits to proton translocation. Key component of the proton channel; it may play a direct role in the translocation of protons across the membrane. The chain is ATP synthase subunit a (atp6) from Caenorhabditis briggsae.